A 151-amino-acid chain; its full sequence is Ribosome maturation factor RimP (151 aa).

It belongs to the RimP family.

It is found in the cytoplasm. Functionally, required for maturation of 30S ribosomal subunits. The sequence is that of Ribosome maturation factor RimP from Shewanella putrefaciens (strain CN-32 / ATCC BAA-453).